We begin with the raw amino-acid sequence, 121 residues long: Small ribosomal subunit protein uS13 (121 aa).

A disordered region spans residues 94-121; that stretch reads GLPLRGQRTRTNARTRKGPRRAAQALKK.

Belongs to the universal ribosomal protein uS13 family. As to quaternary structure, part of the 30S ribosomal subunit. Forms a loose heterodimer with protein S19. Forms two bridges to the 50S subunit in the 70S ribosome.

In terms of biological role, located at the top of the head of the 30S subunit, it contacts several helices of the 16S rRNA. In the 70S ribosome it contacts the 23S rRNA (bridge B1a) and protein L5 of the 50S subunit (bridge B1b), connecting the 2 subunits; these bridges are implicated in subunit movement. Contacts the tRNAs in the A and P-sites. The polypeptide is Small ribosomal subunit protein uS13 (Burkholderia mallei (strain NCTC 10247)).